The chain runs to 390 residues: Period circadian protein (390 aa).

Disordered regions lie at residues 27–120, 164–188, 247–266, and 327–356; these read VTAP…APPV, LEYSGPGPGHGHGIKRGGSHSWEGE, GGNGNVGSGNGNNNQASTNQ, and SPSGTNPSPNRPHKHAHVHSSSEKPSTSQA. Residues 93-114 are compositionally biased toward gly residues; that stretch reads GTSGTGNSGDGGGGGGADGTGS. The span at 247 to 256 shows a compositional bias: gly residues; sequence GGNGNVGSGN.

In terms of assembly, forms a heterodimer with timeless (TIM); the complex then translocates into the nucleus. Post-translationally, phosphorylated with a circadian rhythmicity, probably by the double-time protein (dbt). Phosphorylation could be implicated in the stability of per monomer and in the formation of heterodimer per-tim.

Its subcellular location is the nucleus. The protein localises to the cytoplasm. The protein resides in the perinuclear region. Its function is as follows. Essential for biological clock functions. Determines the period length of circadian and ultradian rhythms; an increase in PER dosage leads to shortened circadian rhythms and a decrease leads to lengthened circadian rhythms. Essential for the circadian rhythmicity of locomotor activity, eclosion behavior, and for the rhythmic component of the male courtship song that originates in the thoracic nervous system. The biological cycle depends on the rhythmic formation and nuclear localization of the TIM-PER complex. Light induces the degradation of TIM, which promotes elimination of PER. Nuclear activity of the heterodimer coordinatively regulates PER and TIM transcription through a negative feedback loop. Behaves as a negative element in circadian transcriptional loop. Does not appear to bind DNA, suggesting indirect transcriptional inhibition. In Drosophila tropicalis (Fruit fly), this protein is Period circadian protein (per).